A 176-amino-acid chain; its full sequence is Isopentenyl-diphosphate Delta-isomerase (176 aa).

The Mn(2+) site is built by His-22 and His-28. In terms of domain architecture, Nudix hydrolase spans 26–160 (LRHKAISVFI…PETFTPWLHI (135 aa)). The active site involves Cys-62. His-64 lines the Mn(2+) pocket. Mg(2+) is bound at residue Glu-82. Residues Glu-108 and Glu-110 each coordinate Mn(2+). Glu-110 is a catalytic residue.

The protein belongs to the IPP isomerase type 1 family. Requires Mg(2+) as cofactor. It depends on Mn(2+) as a cofactor.

Its subcellular location is the cytoplasm. It carries out the reaction isopentenyl diphosphate = dimethylallyl diphosphate. It functions in the pathway isoprenoid biosynthesis; dimethylallyl diphosphate biosynthesis; dimethylallyl diphosphate from isopentenyl diphosphate: step 1/1. It participates in porphyrin-containing compound metabolism; chlorophyll biosynthesis. Its function is as follows. Catalyzes the 1,3-allylic rearrangement of the homoallylic substrate isopentenyl (IPP) to its highly electrophilic allylic isomer, dimethylallyl diphosphate (DMAPP). The polypeptide is Isopentenyl-diphosphate Delta-isomerase (Jannaschia sp. (strain CCS1)).